An 847-amino-acid polypeptide reads, in one-letter code: Guanine nucleotide exchange factor VAV3 (847 aa).

The Calponin-homology (CH) domain occupies 1–119 (MEPWKQCAQW…ETLSRLSRTP (119 aa)). At tyrosine 141 the chain carries Phosphotyrosine. The DH domain occupies 192 to 371 (IRSCCLAEIR…KDLAQYVNEV (180 aa)). The region spanning 400–502 (RPQGDGEIRI…WLEQFEMALS (103 aa)) is the PH domain. The Phorbol-ester/DAG-type zinc-finger motif lies at 513 to 562 (FHDFKMHTFTRVTSCRVCQMLLRGTFYQGYLCFKCGAKAHKECLGRVDNC). Positions 560 to 847 (DNCGRVNSVE…FPSTYVEEDE (288 aa)) are sufficient for interaction with ROS1. Residues 592 to 660 (PGLPKMQVIR…PSDAVKPSPC (69 aa)) enclose the SH3 1 domain. Residues 672 to 766 (WYAGPMERLQ…TLDTTLQFPY (95 aa)) enclose the SH2 domain. The SH3 2 domain maps to 788-847 (KVLGIAIARYDFCARDMRELSLLKGDMVKIYTKMSANGWWRGEVNGRVGWFPSTYVEEDE).

As to quaternary structure, interacts with the PH domain of APS. Interacts with ROS1; constitutive interaction that mediates VAV3 phosphorylation. Interacts (via SH2 domains) with the phosphorylated form of EPHA2. Post-translationally, phosphorylated. Phosphorylation can be mediated by ROS1. In osteoclasts, undergoes tyrosine phosphorylation in response to CSF1. Abundantly expressed in osteoclasts and mature osteoblasts. Also expressed in bone marrow macrophages (at protein level):.

Its function is as follows. Exchange factor for GTP-binding proteins RhoA, RhoG and, to a lesser extent, Rac1. Binds physically to the nucleotide-free states of those GTPases. Plays an important role in angiogenesis. Its recruitment by phosphorylated EPHA2 is critical for EFNA1-induced RAC1 GTPase activation and vascular endothelial cell migration and assembly. May be important for integrin-mediated signaling, at least in some cell types. In osteoclasts, along with SYK tyrosine kinase, required for signaling through integrin alpha-v/beta-1 (ITAGV-ITGB1), a crucial event for osteoclast proper cytoskeleton organization and function. This signaling pathway involves RAC1, but not RHO, activation. Necessary for proper wound healing. In the course of wound healing, required for the phagocytotic cup formation preceding macrophage phagocytosis of apoptotic neutrophils. Responsible for integrin beta-2-mediated macrophage adhesion and, to a lesser extent, contributes to beta-3-mediated adhesion. Does not affect integrin beta-1-mediated adhesion. This chain is Guanine nucleotide exchange factor VAV3 (Vav3), found in Mus musculus (Mouse).